Reading from the N-terminus, the 317-residue chain is Olfactory receptor 6P1 (317 aa).

Topologically, residues 1 to 25 (MRNLSGGHVEEFVLVGFPTTPPLQL) are extracellular. An N-linked (GlcNAc...) asparagine glycan is attached at Asn-3. Residues 26-46 (LLFVLFFAIYLLTLLENALIV) traverse the membrane as a helical segment. Over 47–54 (FTIWLAPS) the chain is Cytoplasmic. A helical transmembrane segment spans residues 55-75 (LHRPMYFFLGHLSFLELWYIN). Residues 76–99 (VTIPRLLAAFLTQDGRVSYVGCMT) lie on the Extracellular side of the membrane. An intrachain disulfide couples Cys-97 to Cys-189. A helical membrane pass occupies residues 100–120 (QLYFFIALACTECVLLAVMAY). The Cytoplasmic segment spans residues 121–139 (DRYLAICGPLLYPSLMPSS). The helical transmembrane segment at 140–160 (LATRLAAASWGSGFFSSMMKL) threads the bilayer. The Extracellular portion of the chain corresponds to 161–197 (LFISQLSYCGPNIINHFFCDISPLLNLTCSDKEQAEL). N-linked (GlcNAc...) asparagine glycosylation is present at Asn-186. The helical transmembrane segment at 198-217 (VDFLLALVMILLPLLAVVSS) threads the bilayer. Residues 218-237 (YTAIIAAILRIPTSRGRHKA) lie on the Cytoplasmic side of the membrane. Residues 238 to 258 (FSTCAAHLAVVVIYYSSTLFT) traverse the membrane as a helical segment. Topologically, residues 259 to 271 (YARPRAMYTFNHN) are extracellular. The helical transmembrane segment at 272–292 (KIISVLYTIIVPFFNPAIYCL) threads the bilayer. The Cytoplasmic segment spans residues 293–317 (RNKEVKEAFRKTVMGRCHYPRDVQD).

The protein belongs to the G-protein coupled receptor 1 family.

The protein resides in the cell membrane. Its function is as follows. Odorant receptor. This Homo sapiens (Human) protein is Olfactory receptor 6P1 (OR6P1).